A 133-amino-acid polypeptide reads, in one-letter code: Putative nickel-responsive regulator (133 aa).

4 residues coordinate Ni(2+): histidine 74, histidine 85, histidine 87, and cysteine 93.

The protein belongs to the transcriptional regulatory CopG/NikR family. Ni(2+) is required as a cofactor.

Functionally, transcriptional regulator. The sequence is that of Putative nickel-responsive regulator from Saccharolobus solfataricus (strain ATCC 35092 / DSM 1617 / JCM 11322 / P2) (Sulfolobus solfataricus).